The sequence spans 107 residues: uncharacterized protein (107 aa).

The disordered stretch occupies residues 88 to 107; that stretch reads GSTPWGSGRQVNAARPIGGR.

The protein resides in the virion. This is an uncharacterized protein from Acanthamoeba polyphaga (Amoeba).